A 309-amino-acid chain; its full sequence is L-aminoadipate-semialdehyde dehydrogenase-phosphopantetheinyl transferase (309 aa).

Residues Arg47, 86-91, and 108-111 each bind CoA; these read RTAKGK and NISH. Residues Asp129 and Glu181 each contribute to the Mg(2+) site. 181–185 contacts CoA; that stretch reads ESFIK. Ser258 bears the Phosphoserine mark.

The protein belongs to the P-Pant transferase superfamily. AcpS family. Monomer. Mg(2+) serves as cofactor. Detected in heart, skeletal muscle, placenta, testis, brain, pancreas, liver and kidney.

The protein localises to the cytoplasm. It is found in the cytosol. It catalyses the reaction apo-[ACP] + CoA = holo-[ACP] + adenosine 3',5'-bisphosphate + H(+). It carries out the reaction apo-[ACP] + acetyl-CoA = acetyl-[ACP] + adenosine 3',5'-bisphosphate + H(+). In terms of biological role, catalyzes the post-translational modification of target proteins by phosphopantetheine. Can transfer the 4'-phosphopantetheine moiety from coenzyme A, regardless of whether the CoA is presented in the free thiol form or as an acetyl thioester, to a serine residue of a broad range of acceptors including the acyl carrier domain of FASN. The protein is L-aminoadipate-semialdehyde dehydrogenase-phosphopantetheinyl transferase (AASDHPPT) of Homo sapiens (Human).